Reading from the N-terminus, the 120-residue chain is MYGVLLVLHGSKIKEWQDVAIQYANLLRKYFDLVEYGFIEFNQPSITEAAKKLASNGVDTIIVVPLLFAAGTHFKRDIPKQLEEIKGVKIMIAEPIGVDERIAEILKERVEEVLRSSTRS.

His9 functions as the Proton acceptor in the catalytic mechanism. His9 is a binding site for Co(2+). Substrate contacts are provided by residues Gln43 and 68–73 (FAAGTH). His73 contacts Co(2+).

Belongs to the CbiX family. CbiXS subfamily. As to quaternary structure, homotetramer; dimer of dimers.

The enzyme catalyses Co-sirohydrochlorin + 2 H(+) = sirohydrochlorin + Co(2+). Its pathway is cofactor biosynthesis; adenosylcobalamin biosynthesis; cob(II)yrinate a,c-diamide from sirohydrochlorin (anaerobic route): step 1/10. Catalyzes the insertion of Co(2+) into sirohydrochlorin as part of the anaerobic pathway to cobalamin biosynthesis. The chain is Sirohydrochlorin cobaltochelatase from Sulfurisphaera tokodaii (strain DSM 16993 / JCM 10545 / NBRC 100140 / 7) (Sulfolobus tokodaii).